The sequence spans 221 residues: Ribosome maturation factor RimM (221 aa).

Residues 1 to 23 (MTERKQGAAAPRPLNRPQGESPK) are disordered. Residues 144-221 (ENEFYWVDLI…RIVVDWGLDY (78 aa)) enclose the PRC barrel domain.

This sequence belongs to the RimM family. Binds ribosomal protein uS19.

The protein localises to the cytoplasm. Its function is as follows. An accessory protein needed during the final step in the assembly of 30S ribosomal subunit, possibly for assembly of the head region. Essential for efficient processing of 16S rRNA. May be needed both before and after RbfA during the maturation of 16S rRNA. It has affinity for free ribosomal 30S subunits but not for 70S ribosomes. This is Ribosome maturation factor RimM from Cupriavidus pinatubonensis (strain JMP 134 / LMG 1197) (Cupriavidus necator (strain JMP 134)).